The chain runs to 115 residues: NAD(P)H-quinone oxidoreductase subunit M (115 aa).

Belongs to the complex I NdhM subunit family. As to quaternary structure, NDH-1 can be composed of about 15 different subunits; different subcomplexes with different compositions have been identified which probably have different functions.

The protein localises to the cellular thylakoid membrane. The enzyme catalyses a plastoquinone + NADH + (n+1) H(+)(in) = a plastoquinol + NAD(+) + n H(+)(out). It carries out the reaction a plastoquinone + NADPH + (n+1) H(+)(in) = a plastoquinol + NADP(+) + n H(+)(out). Functionally, NDH-1 shuttles electrons from an unknown electron donor, via FMN and iron-sulfur (Fe-S) centers, to quinones in the respiratory and/or the photosynthetic chain. The immediate electron acceptor for the enzyme in this species is believed to be plastoquinone. Couples the redox reaction to proton translocation, and thus conserves the redox energy in a proton gradient. Cyanobacterial NDH-1 also plays a role in inorganic carbon-concentration. The polypeptide is NAD(P)H-quinone oxidoreductase subunit M (Parasynechococcus marenigrum (strain WH8102)).